Reading from the N-terminus, the 439-residue chain is 23S rRNA (uracil(1939)-C(5))-methyltransferase RlmD (439 aa).

The TRAM domain occupies 1-54 (MTAPVLIESLDQEGRGVAHAEGKVIFIEGALPGEVVTYNAYRRKPSFELAQVGQ). [4Fe-4S] cluster is bound by residues cysteine 67, cysteine 73, cysteine 76, and cysteine 155. Residues glutamine 264, phenylalanine 293, asparagine 298, glutamate 314, asparagine 342, and aspartate 363 each contribute to the S-adenosyl-L-methionine site. The active-site Nucleophile is the cysteine 391.

Belongs to the class I-like SAM-binding methyltransferase superfamily. RNA M5U methyltransferase family. RlmD subfamily.

It carries out the reaction uridine(1939) in 23S rRNA + S-adenosyl-L-methionine = 5-methyluridine(1939) in 23S rRNA + S-adenosyl-L-homocysteine + H(+). Functionally, catalyzes the formation of 5-methyl-uridine at position 1939 (m5U1939) in 23S rRNA. This chain is 23S rRNA (uracil(1939)-C(5))-methyltransferase RlmD, found in Nitrosospira multiformis (strain ATCC 25196 / NCIMB 11849 / C 71).